Here is an 888-residue protein sequence, read N- to C-terminus: Kinesin-like protein KIF20A (888 aa).

An N-acetylserine modification is found at serine 2. A phosphoserine mark is found at serine 7, serine 14, and serine 21. The Kinesin motor domain maps to 63–506 (KVKVYLRVRP…AKFSAIASQL (444 aa)). Residue 159–166 (GVTNSGKT) coordinates ATP. The residue at position 527 (serine 527) is a Phosphoserine; by PLK1. Phosphoserine is present on serine 531. Coiled coils occupy residues 559–587 (KEEL…EVQL) and 630–760 (ESLT…ERAC). Phosphoserine occurs at positions 667, 683, and 823. The segment at 761–888 (CHNTGAGKLR…LKSGPFGKKY (128 aa)) is globular. Positions 823–863 (STKKRLGANQENQQPNQQPPGKKPFLRNLLPRTPTCQSSTD) are disordered. Position 855 is a phosphothreonine (threonine 855). Residues serine 865, serine 876, and serine 881 each carry the phosphoserine modification.

Belongs to the TRAFAC class myosin-kinesin ATPase superfamily. Kinesin family. In terms of processing, phosphorylated by PLK1 at Ser-527 during mitosis, creating a docking site for PLK1 and recruiting PLK1 at central spindle.

The protein localises to the golgi apparatus. It is found in the cytoplasm. The protein resides in the cytoskeleton. Its subcellular location is the spindle. In terms of biological role, mitotic kinesin required for chromosome passenger complex (CPC)-mediated cytokinesis. Following phosphorylation by PLK1, involved in recruitment of PLK1 to the central spindle. Interacts with guanosine triphosphate (GTP)-bound forms of RAB6A and RAB6B. May act as a motor required for the retrograde RAB6 regulated transport of Golgi membranes and associated vesicles along microtubules. Has a microtubule plus end-directed motility. The sequence is that of Kinesin-like protein KIF20A (KIF20A) from Bos taurus (Bovine).